A 164-amino-acid chain; its full sequence is Protein SprT (164 aa).

The SprT-like domain occupies 14–156; that stretch reads QQAETFFKRP…LCKRCRETLV (143 aa). His69 serves as a coordination point for Zn(2+). Residue Glu70 is part of the active site. Zn(2+) is bound at residue His73.

This sequence belongs to the SprT family. Requires Zn(2+) as cofactor.

It localises to the cytoplasm. This chain is Protein SprT, found in Pseudomonas putida (strain W619).